Consider the following 322-residue polypeptide: NADH-quinone oxidoreductase subunit H (322 aa).

The next 8 membrane-spanning stretches (helical) occupy residues 14–34, 81–101, 114–134, 149–169, 186–206, 237–257, 265–285, and 302–322; these read IFMH…YMSF, YIFV…IPVI, VGVL…LLAG, SIAQ…GIVA, LWNI…GMAL, FFIS…TLFF, FPPV…FVLI, and WKFL…YILI.

The protein belongs to the complex I subunit 1 family. As to quaternary structure, NDH-1 is composed of 13 different subunits. Subunits NuoA, H, J, K, L, M, N constitute the membrane sector of the complex.

The protein resides in the cell inner membrane. The enzyme catalyses a quinone + NADH + 5 H(+)(in) = a quinol + NAD(+) + 4 H(+)(out). Its function is as follows. NDH-1 shuttles electrons from NADH, via FMN and iron-sulfur (Fe-S) centers, to quinones in the respiratory chain. The immediate electron acceptor for the enzyme in this species is believed to be ubiquinone. Couples the redox reaction to proton translocation (for every two electrons transferred, four hydrogen ions are translocated across the cytoplasmic membrane), and thus conserves the redox energy in a proton gradient. This subunit may bind ubiquinone. In Blochmanniella floridana, this protein is NADH-quinone oxidoreductase subunit H.